Here is an 81-residue protein sequence, read N- to C-terminus: Acyl carrier protein (81 aa).

Positions 2 to 80 (ASNEEILAGL…DAVSFIANAQ (79 aa)) constitute a Carrier domain. S40 is modified (O-(pantetheine 4'-phosphoryl)serine).

Belongs to the acyl carrier protein (ACP) family. 4'-phosphopantetheine is transferred from CoA to a specific serine of apo-ACP by AcpS. This modification is essential for activity because fatty acids are bound in thioester linkage to the sulfhydryl of the prosthetic group.

The protein resides in the cytoplasm. The protein operates within lipid metabolism; fatty acid biosynthesis. Its function is as follows. Carrier of the growing fatty acid chain in fatty acid biosynthesis. The chain is Acyl carrier protein from Paenarthrobacter aurescens (strain TC1).